Reading from the N-terminus, the 87-residue chain is U14-lycotoxin-Ls1b (87 aa).

Positions 1-20 are cleaved as a signal peptide; sequence MNSKVFVVLLLLALSTCVLS. Positions 21–66 constitute a WAP domain; the sequence is EKYCPTPRNTSCKKMNIRNNCCRDSDCTSNAFCCAEPCGNFCHKAS. Cystine bridges form between Cys-24-Cys-54, Cys-32-Cys-58, Cys-41-Cys-53, Cys-42-Cys-80, and Cys-47-Cys-62.

Belongs to the venom protein 11 family. 01 (wap-1) subfamily. In terms of processing, contains 5 disulfide bonds. As to expression, expressed by the venom gland.

The protein resides in the secreted. Functionally, has antibacterial activity. This is U14-lycotoxin-Ls1b from Lycosa singoriensis (Wolf spider).